We begin with the raw amino-acid sequence, 717 residues long: Mitochondrial potassium channel ATP-binding subunit (717 aa).

The N-terminal 25 residues, 1–25, are a transit peptide targeting the mitochondrion; sequence MLVHLFRFGIRGGPVPGWSLQSLRF. Helical transmembrane passes span 127–147, 178–198, 278–298, and 365–385; these read LLALGAAIVLALGAALVNVQI, VQLLLLYGVQGLLTFGYLVLL, LMLAVVTPALMGVGTLMGSGL, and NIAFNCMVLGTLFIGGSLVAG. One can recognise an ABC transmembrane type-1 domain in the interval 132–419; sequence AAIVLALGAA…LSVLFGQVVR (288 aa). The region spanning 454–691 is the ABC transporter domain; that stretch reads ITFQNVTFSY…GGLYSELIRR (238 aa). 489 to 496 contributes to the ATP binding site; the sequence is GQSGGGKT. Residues 695 to 717 form a disordered region; that stretch reads DASLTSTPPAEKPEDPKSCQSKA.

The protein belongs to the ABC transporter superfamily. ABCB family. Multidrug resistance exporter (TC 3.A.1.201) subfamily. In terms of assembly, the mitochondrial potassium channel (mitoK(ATP)) is composed of 4 subunits of CCDC51/MITOK and 4 subunits of ABCB8/MITOSUR. Interacts with PAAT. Interacts with NRP1; NRP1 regulates ABCB8/MITOSUR protein levels in mitochondria.

The protein localises to the mitochondrion inner membrane. With respect to regulation, channel activity inhibited by ATP via ABCB8/MITOSUR subunit. Its function is as follows. ATP-binding subunit of the mitochondrial ATP-gated potassium channel (mitoK(ATP)). Together with pore-forming subunit CCDC51/MITOK of the mitoK(ATP) channel, mediates ATP-dependent potassium currents across the mitochondrial inner membrane. An increase in ATP intracellular levels closes the channel, inhibiting K(+) transport, whereas a decrease in ATP levels enhances K(+) uptake in the mitochondrial matrix. Plays a role in mitochondrial iron transport. Required for maintenance of normal cardiac function, possibly by influencing mitochondrial iron export and regulating the maturation of cytosolic iron sulfur cluster-containing enzymes. In Mus musculus (Mouse), this protein is Mitochondrial potassium channel ATP-binding subunit.